The following is a 422-amino-acid chain: Enolase (422 aa).

(2R)-2-phosphoglycerate is bound at residue Gln-162. The Proton donor role is filled by Glu-204. 3 residues coordinate Mg(2+): Asp-241, Glu-285, and Asp-312. 4 residues coordinate (2R)-2-phosphoglycerate: Lys-337, Arg-366, Ser-367, and Lys-388. Lys-337 (proton acceptor) is an active-site residue.

The protein belongs to the enolase family. It depends on Mg(2+) as a cofactor.

The protein resides in the cytoplasm. Its subcellular location is the secreted. It localises to the cell surface. It carries out the reaction (2R)-2-phosphoglycerate = phosphoenolpyruvate + H2O. Its pathway is carbohydrate degradation; glycolysis; pyruvate from D-glyceraldehyde 3-phosphate: step 4/5. Its function is as follows. Catalyzes the reversible conversion of 2-phosphoglycerate (2-PG) into phosphoenolpyruvate (PEP). It is essential for the degradation of carbohydrates via glycolysis. The polypeptide is Enolase (Wolinella succinogenes (strain ATCC 29543 / DSM 1740 / CCUG 13145 / JCM 31913 / LMG 7466 / NCTC 11488 / FDC 602W) (Vibrio succinogenes)).